Here is a 436-residue protein sequence, read N- to C-terminus: MTEATYYFIGIKGSGMSALALVLHDLGHQVLGSDITQYTFTQKGLAAAGIKMLPFDPANLKPGYTVIAGNSFTDDHPEIKRAKELGLTIYRYHEFLGKLIEGYTSIGVAGAHGKTSTTGLLAHTLSGVAKTSYLIGDGTGKGIPDSKFFVFEADEYRRHFLAYHPDYMIMTNIDFDHPDYYTGFEDVYDAFETEANQVKKAIVAWGDDPWLRKLKAKVPVYYYGISDRDDFQARNVDRDTKGSSFDAYFHDQLIGHFFVPLFGEHSVLNALAVVAVAHMEKLDAKLIARELGNFSGVKRRFAEKDLKDMIIVDDYAHHPNEIKATLDAARQKYPDKAIIAVFQPHTFSRTQAYEPQYVQVLSQADQTFLTPIFSSAREKTGKIRSEDITAQIKGAAVIHQEDMKPLLQYHNAVVVFMGAGDIQKYEKAYETILAEE.

Residue 110 to 116 coordinates ATP; sequence GAHGKTS.

This sequence belongs to the MurCDEF family.

It is found in the cytoplasm. It carries out the reaction UDP-N-acetyl-alpha-D-muramate + L-alanine + ATP = UDP-N-acetyl-alpha-D-muramoyl-L-alanine + ADP + phosphate + H(+). Its pathway is cell wall biogenesis; peptidoglycan biosynthesis. Functionally, cell wall formation. In Lacticaseibacillus paracasei (strain ATCC 334 / BCRC 17002 / CCUG 31169 / CIP 107868 / KCTC 3260 / NRRL B-441) (Lactobacillus paracasei), this protein is UDP-N-acetylmuramate--L-alanine ligase.